Here is a 476-residue protein sequence, read N- to C-terminus: Bifunctional protein HldE (476 aa).

Residues 1 to 319 (MKPTLPNYDQ…EAIHGSQDSG (319 aa)) are ribokinase. 195-198 (NMLE) serves as a coordination point for ATP. Asp-264 is a catalytic residue. Positions 344 to 476 (MTNGCFDILH…IIEAIKGGRG (133 aa)) are cytidylyltransferase.

In the N-terminal section; belongs to the carbohydrate kinase PfkB family. It in the C-terminal section; belongs to the cytidylyltransferase family. As to quaternary structure, homodimer.

The catalysed reaction is D-glycero-beta-D-manno-heptose 7-phosphate + ATP = D-glycero-beta-D-manno-heptose 1,7-bisphosphate + ADP + H(+). It catalyses the reaction D-glycero-beta-D-manno-heptose 1-phosphate + ATP + H(+) = ADP-D-glycero-beta-D-manno-heptose + diphosphate. It functions in the pathway nucleotide-sugar biosynthesis; ADP-L-glycero-beta-D-manno-heptose biosynthesis; ADP-L-glycero-beta-D-manno-heptose from D-glycero-beta-D-manno-heptose 7-phosphate: step 1/4. Its pathway is nucleotide-sugar biosynthesis; ADP-L-glycero-beta-D-manno-heptose biosynthesis; ADP-L-glycero-beta-D-manno-heptose from D-glycero-beta-D-manno-heptose 7-phosphate: step 3/4. Functionally, catalyzes the phosphorylation of D-glycero-D-manno-heptose 7-phosphate at the C-1 position to selectively form D-glycero-beta-D-manno-heptose-1,7-bisphosphate. Catalyzes the ADP transfer from ATP to D-glycero-beta-D-manno-heptose 1-phosphate, yielding ADP-D-glycero-beta-D-manno-heptose. The protein is Bifunctional protein HldE of Aliivibrio fischeri (strain ATCC 700601 / ES114) (Vibrio fischeri).